The sequence spans 377 residues: Opsin-2 (377 aa).

The Extracellular portion of the chain corresponds to 1-57 (MNNQSENYYHGAQFEALKSAGAIEMLGDGLTGDDLAAIPEHWLSYPAPPASAHTALA). An N-linked (GlcNAc...) asparagine glycan is attached at Asn3. A helical membrane pass occupies residues 58 to 78 (LLYIFFTFAALVGNGMVIFIF). Topologically, residues 79–89 (STTKSLRTSSN) are cytoplasmic. A helical transmembrane segment spans residues 90–110 (FLVLNLAILDFIMMAKAPIFI). At 111-126 (YNSAMRGFAVGTVGCQ) the chain is on the extracellular side. Cys125 and Cys202 are joined by a disulfide. The chain crosses the membrane as a helical span at residues 127–146 (IFALMGAYSGIGAGMTNACI). Topologically, residues 147–166 (AYDRHSTITRPLDGRLSEGK) are cytoplasmic. A helical membrane pass occupies residues 167-187 (VLLMVAFVWIYSTPWALLPLL). The Extracellular portion of the chain corresponds to 188 to 214 (KIWGRYVPEGYLTSCSFDYLTNTFDTK). The helical transmembrane segment at 215 to 235 (LFVACIFTCSYVFPMSLIIYF) threads the bilayer. The Cytoplasmic segment spans residues 236 to 283 (YSGIVKQVFAHEAALREQAKKMNVESLRANQGGSSESAEIRIAKAALT). A helical transmembrane segment spans residues 284–304 (VCFLFVASWTPYGVMALIGAF). Over 305–314 (GNQQLLTPGV) the chain is Extracellular. A helical transmembrane segment spans residues 315-335 (TMIPAVACKAVACISPWVYAI). At 336 to 377 (RHPMYRQELQRRMPWLQIDEPDDTVSTATSNTTNSAPPAATA) the chain is on the cytoplasmic side. The tract at residues 355 to 377 (EPDDTVSTATSNTTNSAPPAATA) is disordered. Residues 361-377 (STATSNTTNSAPPAATA) show a composition bias toward low complexity.

It belongs to the G-protein coupled receptor 1 family. Opsin subfamily. In the retina, expression is essentially uniformly distributed, but a higher level is seen in the dorsal region of the retina and in the dorsal rim retinulae.

The protein resides in the membrane. In terms of biological role, visual pigments are the light-absorbing molecules that mediate vision. They consist of an apoprotein, opsin, covalently linked to cis-retinal. May play a role in photoperiodic photoreception. This is Opsin-2 (OP2) from Manduca sexta (Tobacco hawkmoth).